Here is a 1063-residue protein sequence, read N- to C-terminus: Error-prone DNA polymerase (1063 aa).

This sequence belongs to the DNA polymerase type-C family. DnaE2 subfamily.

It localises to the cytoplasm. It carries out the reaction DNA(n) + a 2'-deoxyribonucleoside 5'-triphosphate = DNA(n+1) + diphosphate. Its function is as follows. DNA polymerase involved in damage-induced mutagenesis and translesion synthesis (TLS). It is not the major replicative DNA polymerase. This chain is Error-prone DNA polymerase, found in Burkholderia mallei (strain ATCC 23344).